The primary structure comprises 257 residues: tRNA (guanine-N(7)-)-methyltransferase (257 aa).

Residues 1-42 (MTVVVSDHQNPRPPGDDAAPLGRTGNRDRPPGSFFGRRKGHR) form a disordered region. Residues glutamate 84, glutamate 109, aspartate 136, and aspartate 158 each contribute to the S-adenosyl-L-methionine site. Aspartate 158 is a catalytic residue. Substrate contacts are provided by lysine 162 and aspartate 194.

This sequence belongs to the class I-like SAM-binding methyltransferase superfamily. TrmB family.

It catalyses the reaction guanosine(46) in tRNA + S-adenosyl-L-methionine = N(7)-methylguanosine(46) in tRNA + S-adenosyl-L-homocysteine. It functions in the pathway tRNA modification; N(7)-methylguanine-tRNA biosynthesis. In terms of biological role, catalyzes the formation of N(7)-methylguanine at position 46 (m7G46) in tRNA. In Nitrobacter winogradskyi (strain ATCC 25391 / DSM 10237 / CIP 104748 / NCIMB 11846 / Nb-255), this protein is tRNA (guanine-N(7)-)-methyltransferase.